Here is a 329-residue protein sequence, read N- to C-terminus: MTSIAIDAMGGDFGEKPIIEGVIQALKEREFKAILVGDPQKLKTLIPQELNSYIEYEEAFDVFAMDENSTDALKRKDSTIYKAIDLVRNQKAKAIVSAGHSGATMSLATLRLGRLANIARPAIATLMPNIHSRTLVLDVGANVDCKSEHLFQFAIMGEAYAKEILKIAKPRVALLSNGEEECKGNELTKETHQLLKQLPNFVGNAEGRDIFNGTIDVLVCDGFNGNILLKTGEGVASVITKLLKQEIQKSFLAKLGYLLAKPAFNELKTHIDYEEYGGAPLLGVKECVIISHGKSGPKAIKNAIFQALNFTQSNINQTIEKELSNYEIN.

Belongs to the PlsX family. As to quaternary structure, homodimer. Probably interacts with PlsY.

It localises to the cytoplasm. The enzyme catalyses a fatty acyl-[ACP] + phosphate = an acyl phosphate + holo-[ACP]. Its pathway is lipid metabolism; phospholipid metabolism. Its function is as follows. Catalyzes the reversible formation of acyl-phosphate (acyl-PO(4)) from acyl-[acyl-carrier-protein] (acyl-ACP). This enzyme utilizes acyl-ACP as fatty acyl donor, but not acyl-CoA. This Campylobacter lari (strain RM2100 / D67 / ATCC BAA-1060) protein is Phosphate acyltransferase.